A 947-amino-acid chain; its full sequence is Protocadherin alpha-4 (947 aa).

Positions 1-29 (MEFSWGSGQESQRLLLSFLLLAIWEAGNS) are cleaved as a signal peptide. Cadherin domains follow at residues 30–133 (QIHY…PPRF), 134–242 (PTTQ…APVF), 243–350 (DRSL…VPEL), 351–455 (EFKS…APVF), 456–565 (AQPE…APTL), and 573–681 (SGGI…APSR). At 30–697 (QIHYSIPEEA…HSEASLVDVN (668 aa)) the chain is on the extracellular side. Residues Cys96 and Cys102 are joined by a disulfide bond. Asn257 and Asn265 each carry an N-linked (GlcNAc...) asparagine glycan. The O-linked (Man) threonine glycan is linked to Thr438. Ser440 and Ser442 each carry an O-linked (Man) serine glycan. Asn548 is a glycosylation site (N-linked (GlcNAc...) asparagine). A helical membrane pass occupies residues 698 to 718 (VYLIIAICAVSSLLVLTLLLY). The Cytoplasmic segment spans residues 719 to 947 (TALRCSTVPS…GNSTTDNSDQ (229 aa)). PXXP repeat units follow at residues 734–737 (PPKP), 774–777 (PSLS), 796–799 (PRQP), 829–832 (PGGP), 870–873 (PGNP), and 888–891 (PGSP). Residues 734 to 891 (PPKPVMVCSS…PDKFIIPGSP (158 aa)) are 6 X 4 AA repeats of P-X-X-P. The interval 738–947 (VMVCSSAVGS…GNSTTDNSDQ (210 aa)) is required for interaction with FYN. Disordered stretches follow at residues 761–805 (GEYP…DWRY) and 824–853 (ILRAGPGGPDQQWPTVSSATPEPEAGEVSP). Residues 891-947 (PAIISIRQEPANNQIDKSDFITFGKKEETKKKKKKKKGNKTQEKKEKGNSTTDNSDQ) are disordered. Basic and acidic residues predominate over residues 906–920 (DKSDFITFGKKEETK).

As to quaternary structure, forms homodimers in trans (molecules expressed by two different cells). Forms promiscuous heterodimers in cis (at the plasma membrane of the same cell) with other protocadherins. Interacts with FYN. In terms of tissue distribution, detected in brain throughout embryonic development. Detected in adult brain, in particular in cerebellum and forebrain.

It is found in the cell membrane. Its function is as follows. Calcium-dependent cell-adhesion protein involved in cells self-recognition and non-self discrimination. Thereby, it is involved in the establishment and maintenance of specific neuronal connections in the brain. The sequence is that of Protocadherin alpha-4 from Mus musculus (Mouse).